The sequence spans 1720 residues: DNA-directed RNA polymerase I subunit RPA1 (1720 aa).

Residues Cys64, Cys67, Cys74, His77, Cys104, and Cys107 each contribute to the Zn(2+) site. Residues 110–201 (LTCPRAVIHL…IALFWKAHMN (92 aa)) are clamp. Residues Cys205 and Cys208 each contribute to the Zn(2+) site. Residue Ser240 is modified to Phosphoserine. Residues 320–426 (FTNGQTVNLQ…IRQILEKKEG (107 aa)) form a clamp region. The segment at 403–416 (DSEMDKLMMDKYPG) is rudder. DNA contacts are provided by Lys424, Arg429, and Arg436. Residues 468-542 (YPQPVTPWNV…QGTKIVCRHV (75 aa)) form an involved in RRN3 binding to Pol I complex region. Residue Arg552 participates in RNA binding. 3 residues coordinate Mg(2+): Asp588, Asp590, and Asp592. Residue Asp592 participates in RNA binding. The interval 805–883 (KPKADVKRQR…NEINKACMPF (79 aa)) is funnel. Residues 960 to 1001 (KPPEFFFHCMAGREGLVDTAVKTSRSGYLQRCIIKHLEGLVV) form a bridging helix region. Positions 1060–1155 (ADPKKALHHF…SLSVWRPDIY (96 aa)) are mediates the interaction with TOP2A. The interval 1207–1248 (PGEAVGLLAAQSIGEPSTQMTLNTFHFAGRGEMNVTLGIPRL) is trigger loop. Arg1249 lines the DNA pocket. The interval 1365-1498 (RNVNTRRATQ…SQEPQGPEAM (134 aa)) is disordered. Basic and acidic residues predominate over residues 1373 to 1390 (TQRDLDNAGELGRSRGEQ). The residue at position 1386 (Ser1386) is a Phosphoserine. Composition is skewed to acidic residues over residues 1391–1412 (EGDE…DADA) and 1422–1446 (EEEV…EDMQ). The span at 1447–1461 (EERNPHREGARKTQE) shows a compositional bias: basic and acidic residues. Positions 1462–1474 (QDEEVGLGTEEDP) are enriched in acidic residues.

Belongs to the RNA polymerase beta' chain family. As to quaternary structure, component of the RNA polymerase I (Pol I) complex consisting of 13 subunits: a ten-subunit catalytic core composed of POLR1A/RPA1, POLR1B/RPA2, POLR1C/RPAC1, POLR1D/RPAC2, POLR1H/RPA12, POLR2E/RPABC1, POLR2F/RPABC2, POLR2H/RPABC3, POLR2K/RPABC4 and POLR2L/RPABC5; a mobile stalk subunit POLR1F/RPA43 protruding from the core and additional subunits homologous to general transcription factors POLR1E/RPA49 and POLR1G/RPA34. Part of Pol I pre-initiation complex (PIC), in which Pol I core assembles with RRN3 and promoter-bound UTBF and SL1/TIF-IB complex. Interacts (via dock II domain) with TOP2A; this interaction may assist Pol I transcription initiation by releasing supercoils occurring during DNA unwinding. Interacts with CAVIN1; this interaction induces the dissociation of Pol I complex paused at rDNA terminator sequences. Interacts with MYO1C. Interacts with ERBB2. Interacts with DDX11. Interacts with RECQL5. Mg(2+) serves as cofactor.

It localises to the nucleus. Its subcellular location is the nucleolus. It is found in the chromosome. It carries out the reaction RNA(n) + a ribonucleoside 5'-triphosphate = RNA(n+1) + diphosphate. Functionally, catalytic core component of RNA polymerase I (Pol I), a DNA-dependent RNA polymerase which synthesizes ribosomal RNA precursors using the four ribonucleoside triphosphates as substrates. Transcribes 47S pre-rRNAs from multicopy rRNA gene clusters, giving rise to 5.8S, 18S and 28S ribosomal RNAs. Pol I-mediated transcription cycle proceeds through transcription initiation, transcription elongation and transcription termination stages. During transcription initiation, Pol I pre-initiation complex (PIC) is recruited by the selectivity factor 1 (SL1/TIF-IB) complex bound to the core promoter that precedes an rDNA repeat unit. The PIC assembly bends the promoter favoring the formation of the transcription bubble and promoter escape. Once the polymerase has escaped from the promoter it enters the elongation phase during which RNA is actively polymerized, based on complementarity with the template DNA strand. Highly processive, assembles in structures referred to as 'Miller trees' where many elongating Pol I complexes queue and transcribe the same rDNA coding regions. At terminator sequences downstream of the rDNA gene, PTRF interacts with Pol I and halts Pol I transcription leading to the release of the RNA transcript and polymerase from the DNA. Forms Pol I active center together with the second largest subunit POLR1B/RPA2. Appends one nucleotide at a time to the 3' end of the nascent RNA, with POLR1A/RPA1 contributing a Mg(2+)-coordinating DxDGD motif, and POLR1B/RPA2 participating in the coordination of a second Mg(2+) ion and providing lysine residues believed to facilitate Watson-Crick base pairing between the incoming nucleotide and the template base. Typically, Mg(2+) ions direct a 5' nucleoside triphosphate to form a phosphodiester bond with the 3' hydroxyl of the preceding nucleotide of the nascent RNA, with the elimination of pyrophosphate. Has proofreading activity: Pauses and backtracks to allow the cleavage of a missincorporated nucleotide via POLR1H/RPA12. High Pol I processivity is associated with decreased transcription fidelity. This chain is DNA-directed RNA polymerase I subunit RPA1, found in Homo sapiens (Human).